The chain runs to 258 residues: Undecaprenyl-diphosphatase (258 aa).

8 consecutive transmembrane segments (helical) span residues 1–21, 42–62, 69–89, 96–116, 135–155, 173–193, 211–231, and 237–257; these read MDFL…FLPV, LKCF…FMFF, FNLW…GFLA, FFEP…FIVV, VSFK…IPGT, EVAA…ATAY, IFLV…KLFL, and FSYI…LIYI.

This sequence belongs to the UppP family.

Its subcellular location is the cell inner membrane. It catalyses the reaction di-trans,octa-cis-undecaprenyl diphosphate + H2O = di-trans,octa-cis-undecaprenyl phosphate + phosphate + H(+). Functionally, catalyzes the dephosphorylation of undecaprenyl diphosphate (UPP). Confers resistance to bacitracin. In Campylobacter fetus subsp. fetus (strain 82-40), this protein is Undecaprenyl-diphosphatase.